Here is a 287-residue protein sequence, read N- to C-terminus: Large ribosomal subunit protein uL2 (287 aa).

Basic residues-rich tracts occupy residues 209–220 (GRNRWKARRPKV) and 258–287 (KTRK…GRQS). The segment at 209-287 (GRNRWKARRP…SKRSRGGRQS (79 aa)) is disordered.

This sequence belongs to the universal ribosomal protein uL2 family. As to quaternary structure, part of the 50S ribosomal subunit. Forms a bridge to the 30S subunit in the 70S ribosome.

Its function is as follows. One of the primary rRNA binding proteins. Required for association of the 30S and 50S subunits to form the 70S ribosome, for tRNA binding and peptide bond formation. It has been suggested to have peptidyltransferase activity; this is somewhat controversial. Makes several contacts with the 16S rRNA in the 70S ribosome. The protein is Large ribosomal subunit protein uL2 of Acaryochloris marina (strain MBIC 11017).